A 124-amino-acid chain; its full sequence is Fluoride-specific ion channel FluC (124 aa).

Helical transmembrane passes span 5–25 (ILAV…AGTW), 37–57 (ATLA…GLFL), 69–89 (GLIV…LDTL), and 99–119 (LALG…WAGL). 2 residues coordinate Na(+): Gly76 and Thr79.

It belongs to the fluoride channel Fluc/FEX (TC 1.A.43) family.

The protein localises to the cell inner membrane. It carries out the reaction fluoride(in) = fluoride(out). Na(+) is not transported, but it plays an essential structural role and its presence is essential for fluoride channel function. Functionally, fluoride-specific ion channel. Important for reducing fluoride concentration in the cell, thus reducing its toxicity. In Pseudomonas syringae pv. tomato (strain ATCC BAA-871 / DC3000), this protein is Fluoride-specific ion channel FluC.